The chain runs to 151 residues: UPF0178 protein Spea_2958 (151 aa).

It belongs to the UPF0178 family.

In Shewanella pealeana (strain ATCC 700345 / ANG-SQ1), this protein is UPF0178 protein Spea_2958.